A 187-amino-acid polypeptide reads, in one-letter code: Adenine phosphoribosyltransferase (187 aa).

Belongs to the purine/pyrimidine phosphoribosyltransferase family. Homodimer.

The protein localises to the cytoplasm. The enzyme catalyses AMP + diphosphate = 5-phospho-alpha-D-ribose 1-diphosphate + adenine. The protein operates within purine metabolism; AMP biosynthesis via salvage pathway; AMP from adenine: step 1/1. Functionally, catalyzes a salvage reaction resulting in the formation of AMP, that is energically less costly than de novo synthesis. This chain is Adenine phosphoribosyltransferase, found in Yersinia pseudotuberculosis serotype O:3 (strain YPIII).